A 252-amino-acid polypeptide reads, in one-letter code: tRNA (guanine-N(7)-)-methyltransferase (252 aa).

Positions 75, 100, 127, and 150 each coordinate S-adenosyl-L-methionine. Asp150 is a catalytic residue. A substrate-binding site is contributed by Lys154. Residues 156-161 (RHNKRR) are interaction with RNA. Substrate-binding positions include Asp186 and 223 to 226 (THFE).

It belongs to the class I-like SAM-binding methyltransferase superfamily. TrmB family.

The catalysed reaction is guanosine(46) in tRNA + S-adenosyl-L-methionine = N(7)-methylguanosine(46) in tRNA + S-adenosyl-L-homocysteine. It participates in tRNA modification; N(7)-methylguanine-tRNA biosynthesis. Its function is as follows. Catalyzes the formation of N(7)-methylguanine at position 46 (m7G46) in tRNA. This Xanthomonas oryzae pv. oryzae (strain MAFF 311018) protein is tRNA (guanine-N(7)-)-methyltransferase.